Reading from the N-terminus, the 155-residue chain is MGRFIFVSFGLLVVFLSLSGTAADCPSGWSSYDGHCYQVFSDLKNWDDAESFCSGQHEGSRLASIHSREEEAFVGKMASRTLKYTSMWLGLNNPWKECKWEWSDDTRLDYKVWTRRPYCTVMVVKTDRIFWFNRGCEKSVSFVCKFKAYSEDAAE.

An N-terminal signal peptide occupies residues 1–23; the sequence is MGRFIFVSFGLLVVFLSLSGTAA. Cystine bridges form between Cys-25–Cys-36, Cys-53–Cys-144, and Cys-119–Cys-136. The region spanning 32–145 is the C-type lectin domain; sequence YDGHCYQVFS…CEKSVSFVCK (114 aa).

Belongs to the snaclec family. As to quaternary structure, heterodimer; disulfide-linked.

It is found in the secreted. Interferes with one step of hemostasis (modulation of platelet aggregation, or coagulation cascade, for example). This chain is Snaclec clone 2100755, found in Deinagkistrodon acutus (Hundred-pace snake).